Consider the following 208-residue polypeptide: Harpin secretion protein HrpW (208 aa).

4 helical membrane-spanning segments follow: residues Leu-2–Phe-22, Ala-46–Ile-66, Ile-149–Leu-169, and Val-176–Trp-196.

Belongs to the FliP/MopC/SpaP family.

It is found in the cell membrane. Required for the secretion of harpin. The sequence is that of Harpin secretion protein HrpW (hrpW) from Pseudomonas syringae pv. syringae.